Here is a 205-residue protein sequence, read N- to C-terminus: Ribosomal RNA small subunit methyltransferase G (205 aa).

S-adenosyl-L-methionine contacts are provided by residues G70, L75, 124–125 (IE), and R138.

Belongs to the methyltransferase superfamily. RNA methyltransferase RsmG family.

Its subcellular location is the cytoplasm. It catalyses the reaction guanosine(527) in 16S rRNA + S-adenosyl-L-methionine = N(7)-methylguanosine(527) in 16S rRNA + S-adenosyl-L-homocysteine. In terms of biological role, specifically methylates the N7 position of guanine in position 527 of 16S rRNA. The sequence is that of Ribosomal RNA small subunit methyltransferase G from Ruegeria sp. (strain TM1040) (Silicibacter sp.).